A 334-amino-acid polypeptide reads, in one-letter code: Coiled-coil domain-containing protein 89 (334 aa).

A coiled-coil region spans residues 75–318 (EAAQRFQSER…EAYKKHSGDL (244 aa)).

This sequence belongs to the CCDC89 family. As to quaternary structure, interacts (via C-terminus) with hey1/bc8 (via Orange domain). As to expression, in adults, expressed at varying levels in different organs including the liver and brain, with highest expression in the testis.

The protein localises to the cytoplasm. The protein resides in the nucleus. The chain is Coiled-coil domain-containing protein 89 from Xenopus laevis (African clawed frog).